The sequence spans 188 residues: Large ribosomal subunit protein bL35m (188 aa).

Belongs to the bacterial ribosomal protein bL35 family. Component of the mitochondrial large ribosomal subunit (mt-LSU). Mature mammalian 55S mitochondrial ribosomes consist of a small (28S) and a large (39S) subunit. The 28S small subunit contains a 12S ribosomal RNA (12S mt-rRNA) and 30 different proteins. The 39S large subunit contains a 16S rRNA (16S mt-rRNA), a copy of mitochondrial valine transfer RNA (mt-tRNA(Val)), which plays an integral structural role, and 52 different proteins.

The protein resides in the mitochondrion. This chain is Large ribosomal subunit protein bL35m (MRPL35), found in Homo sapiens (Human).